We begin with the raw amino-acid sequence, 346 residues long: Eukaryotic translation initiation factor 3 subunit I (346 aa).

WD repeat units follow at residues 8 to 49 (GHER…GTYH), 50 to 91 (GHQG…KTWD), 145 to 184 (CEDSKATVAGWSYLSKYIIAGHEDGSVSQFDGKNGDLLYN), 189 to 228 (ELNQPITDLQWSHDRTYFITASKDKTSKLITAKDLEVLKT), and 286 to 325 (GHFGPLNTVAADPTGKSYASGGEDGYVRIHHFDKGYFDFM).

Belongs to the eIF-3 subunit I family. As to quaternary structure, component of the eukaryotic translation initiation factor 3 (eIF-3) complex.

The protein localises to the cytoplasm. In terms of biological role, component of the eukaryotic translation initiation factor 3 (eIF-3) complex, which is involved in protein synthesis of a specialized repertoire of mRNAs and, together with other initiation factors, stimulates binding of mRNA and methionyl-tRNAi to the 40S ribosome. The eIF-3 complex specifically targets and initiates translation of a subset of mRNAs involved in cell proliferation. This Neurospora crassa (strain ATCC 24698 / 74-OR23-1A / CBS 708.71 / DSM 1257 / FGSC 987) protein is Eukaryotic translation initiation factor 3 subunit I (tif-34).